The primary structure comprises 66 residues: DNA-directed RNA polymerase subunit Rpo10 (66 aa).

Zn(2+)-binding residues include C7, C10, C47, and C48.

It belongs to the archaeal Rpo10/eukaryotic RPB10 RNA polymerase subunit family. Part of the RNA polymerase complex. It depends on Zn(2+) as a cofactor.

Its subcellular location is the cytoplasm. The enzyme catalyses RNA(n) + a ribonucleoside 5'-triphosphate = RNA(n+1) + diphosphate. In terms of biological role, DNA-dependent RNA polymerase (RNAP) catalyzes the transcription of DNA into RNA using the four ribonucleoside triphosphates as substrates. The sequence is that of DNA-directed RNA polymerase subunit Rpo10 from Halobacterium salinarum (strain ATCC 29341 / DSM 671 / R1).